Here is a 160-residue protein sequence, read N- to C-terminus: SsrA-binding protein (160 aa).

The segment at Lys131–Asp160 is disordered.

This sequence belongs to the SmpB family.

Its subcellular location is the cytoplasm. In terms of biological role, required for rescue of stalled ribosomes mediated by trans-translation. Binds to transfer-messenger RNA (tmRNA), required for stable association of tmRNA with ribosomes. tmRNA and SmpB together mimic tRNA shape, replacing the anticodon stem-loop with SmpB. tmRNA is encoded by the ssrA gene; the 2 termini fold to resemble tRNA(Ala) and it encodes a 'tag peptide', a short internal open reading frame. During trans-translation Ala-aminoacylated tmRNA acts like a tRNA, entering the A-site of stalled ribosomes, displacing the stalled mRNA. The ribosome then switches to translate the ORF on the tmRNA; the nascent peptide is terminated with the 'tag peptide' encoded by the tmRNA and targeted for degradation. The ribosome is freed to recommence translation, which seems to be the essential function of trans-translation. This Pseudomonas fluorescens (strain ATCC BAA-477 / NRRL B-23932 / Pf-5) protein is SsrA-binding protein.